The primary structure comprises 249 residues: Ditrans,polycis-undecaprenyl-diphosphate synthase ((2E,6E)-farnesyl-diphosphate specific) (249 aa).

The active site involves aspartate 26. Aspartate 26 is a binding site for Mg(2+). Substrate-binding positions include 27–30, tryptophan 31, arginine 39, histidine 43, and 71–73; these read GNGR and SRE. The Proton acceptor role is filled by asparagine 74. Residues tryptophan 75, arginine 77, arginine 194, and 200–202 contribute to the substrate site; that span reads RIS. Glutamate 213 is a binding site for Mg(2+).

This sequence belongs to the UPP synthase family. Homodimer. Mg(2+) serves as cofactor.

It carries out the reaction 8 isopentenyl diphosphate + (2E,6E)-farnesyl diphosphate = di-trans,octa-cis-undecaprenyl diphosphate + 8 diphosphate. In terms of biological role, catalyzes the sequential condensation of isopentenyl diphosphate (IPP) with (2E,6E)-farnesyl diphosphate (E,E-FPP) to yield (2Z,6Z,10Z,14Z,18Z,22Z,26Z,30Z,34E,38E)-undecaprenyl diphosphate (di-trans,octa-cis-UPP). UPP is the precursor of glycosyl carrier lipid in the biosynthesis of bacterial cell wall polysaccharide components such as peptidoglycan and lipopolysaccharide. The polypeptide is Ditrans,polycis-undecaprenyl-diphosphate synthase ((2E,6E)-farnesyl-diphosphate specific) (Buchnera aphidicola subsp. Schizaphis graminum (strain Sg)).